The sequence spans 186 residues: Large ribosomal subunit protein uL22 (186 aa).

Residues 161-186 (VDDEPAKKKLSKKKLQRQKEKMLRSE) form a disordered region. Over residues 177–186 (RQKEKMLRSE) the composition is skewed to basic and acidic residues.

It belongs to the universal ribosomal protein uL22 family.

This is Large ribosomal subunit protein uL22 (RpL17) from Drosophila pseudoobscura pseudoobscura (Fruit fly).